The chain runs to 520 residues: Probable bifunctional tRNA threonylcarbamoyladenosine biosynthesis protein (520 aa).

Residues 1-318 (MKIGPVLGIE…YRADQVLVTW (318 aa)) form a kae1 region. The Fe cation site is built by histidine 105, histidine 109, and tyrosine 126. Residues 126–130 (YASGA), aspartate 158, glycine 171, glutamate 175, and asparagine 251 contribute to the L-threonylcarbamoyladenylate site. Fe cation is bound at residue aspartate 279. Positions 327 to 520 (RHPDAYSARG…HEIELRGRYL (194 aa)) constitute a Protein kinase domain. ATP is bound by residues 333-341 (SARGAEAIV) and lysine 350. The active-site Proton acceptor; for kinase activity is aspartate 437.

The protein in the N-terminal section; belongs to the KAE1 / TsaD family. This sequence in the C-terminal section; belongs to the protein kinase superfamily. Tyr protein kinase family. BUD32 subfamily. As to quaternary structure, component of the KEOPS complex that consists of Kae1, Bud32, Cgi121 and Pcc1; the whole complex dimerizes. The cofactor is Fe(2+).

The protein resides in the cytoplasm. The catalysed reaction is L-seryl-[protein] + ATP = O-phospho-L-seryl-[protein] + ADP + H(+). It carries out the reaction L-threonyl-[protein] + ATP = O-phospho-L-threonyl-[protein] + ADP + H(+). The enzyme catalyses L-threonylcarbamoyladenylate + adenosine(37) in tRNA = N(6)-L-threonylcarbamoyladenosine(37) in tRNA + AMP + H(+). In terms of biological role, required for the formation of a threonylcarbamoyl group on adenosine at position 37 (t(6)A37) in tRNAs that read codons beginning with adenine. Is a component of the KEOPS complex that is probably involved in the transfer of the threonylcarbamoyl moiety of threonylcarbamoyl-AMP (TC-AMP) to the N6 group of A37. The Kae1 domain likely plays a direct catalytic role in this reaction. The Bud32 domain probably displays kinase activity that regulates Kae1 function. This is Probable bifunctional tRNA threonylcarbamoyladenosine biosynthesis protein from Methanospirillum hungatei JF-1 (strain ATCC 27890 / DSM 864 / NBRC 100397 / JF-1).